The sequence spans 90 residues: MACPLDQAIGLLVAIFHKYSGQEGDKNTLSKSELKELIQKELTIGAKLQDAEIAKLMDDLDRNKDQVVNFQEYVTFLGALAMIYNDVLRG.

EF-hand domains are found at residues 12–47 (LVAIFHKYSGQEGDKNTLSKSELKELIQKELTIGAK) and 48–83 (LQDAEIAKLMDDLDRNKDQVVNFQEYVTFLGALAMI). Residues Thr28 and Glu33 each contribute to the Ca(2+) site. Lys40 is subject to N6-acetyllysine. Lys47 carries the N6-acetyllysine; alternate modification. Residue Lys47 is modified to N6-succinyllysine; alternate. Asp61, Asn63, Asp65, and Glu72 together coordinate Ca(2+).

Belongs to the S-100 family. As to quaternary structure, homodimer; head to tail assembly of 2 subunits. Interacts with CACYBP in a calcium-dependent manner. Interacts with ANXA2 and ANXA11 (via N-terminus). Interacts with SUGT1. Interacts with TP53; has higher affinity for TP53 that is phosphorylated on its N-terminal domain, and lower affinity for TP53 that is phosphorylated on its C-terminal domain. Interacts with tropomyosin. Interacts with FKBP4. Interacts with PPP5C (via TPR repeats); the interaction is calcium-dependent and modulates PPP5C activity. Interacts with TPPP; this interaction inhibits TPPP dimerization.

The protein localises to the nucleus envelope. The protein resides in the cytoplasm. It localises to the cell membrane. May function as calcium sensor and modulator, contributing to cellular calcium signaling. May function by interacting with other proteins, such as TPR-containing proteins, and indirectly play a role in many physiological processes such as the reorganization of the actin cytoskeleton and in cell motility. Binds 2 calcium ions. Calcium binding is cooperative. The chain is Protein S100-A6 (S100A6) from Sus scrofa (Pig).